The chain runs to 167 residues: uncharacterized protein (167 aa).

2 DED domains span residues Asp2–Gln75 and Thr93–Val167.

This is an uncharacterized protein from Saimiriine herpesvirus 2 (strain 11) (SaHV-2).